Here is a 151-residue protein sequence, read N- to C-terminus: UPF0208 membrane protein plu3094 (151 aa).

Helical transmembrane passes span 46–65 (FGIR…QIAL) and 69–91 (LGPA…WWLG).

Belongs to the UPF0208 family.

It localises to the cell inner membrane. This Photorhabdus laumondii subsp. laumondii (strain DSM 15139 / CIP 105565 / TT01) (Photorhabdus luminescens subsp. laumondii) protein is UPF0208 membrane protein plu3094.